A 201-amino-acid polypeptide reads, in one-letter code: Recombination protein RecR (201 aa).

The C4-type zinc finger occupies 60–75; sequence CSRCFHFTDAEECSIC. In terms of domain architecture, Toprim spans 83–178; sequence GEICVVETTA…RVSRIAYGIP (96 aa).

The protein belongs to the RecR family.

Its function is as follows. May play a role in DNA repair. It seems to be involved in an RecBC-independent recombinational process of DNA repair. It may act with RecF and RecO. This chain is Recombination protein RecR, found in Syntrophobacter fumaroxidans (strain DSM 10017 / MPOB).